Reading from the N-terminus, the 343-residue chain is Fanconi anemia group F protein (343 aa).

Belongs to the multisubunit FA complex composed of FANCA, FANCB, FANCC, FANCE, FANCF, FANCG, FANCL/PHF9 and FANCM. In complex with FANCA, FANCG and FANCL, but not with FANCC, nor FANCE, interacts with HES1; this interaction may be essential for the stability and nuclear localization of FA core complex proteins.

The protein resides in the nucleus. In terms of biological role, DNA repair protein that may operate in a postreplication repair or a cell cycle checkpoint function. May be implicated in interstrand DNA cross-link repair and in the maintenance of normal chromosome stability. The sequence is that of Fanconi anemia group F protein from Mus musculus (Mouse).